Consider the following 281-residue polypeptide: Shikimate dehydrogenase (NADP(+)) (281 aa).

Residues 14-16 and threonine 61 contribute to the shikimate site; that span reads SKS. Lysine 65 (proton acceptor) is an active-site residue. Residues asparagine 86 and aspartate 105 each coordinate shikimate. Residues 130-134, 154-159, and methionine 221 contribute to the NADP(+) site; these read GAGGA and NRTAAK. Tyrosine 223 contributes to the shikimate binding site. Glycine 245 serves as a coordination point for NADP(+).

This sequence belongs to the shikimate dehydrogenase family. As to quaternary structure, homodimer.

The enzyme catalyses shikimate + NADP(+) = 3-dehydroshikimate + NADPH + H(+). The protein operates within metabolic intermediate biosynthesis; chorismate biosynthesis; chorismate from D-erythrose 4-phosphate and phosphoenolpyruvate: step 4/7. Involved in the biosynthesis of the chorismate, which leads to the biosynthesis of aromatic amino acids. Catalyzes the reversible NADPH linked reduction of 3-dehydroshikimate (DHSA) to yield shikimate (SA). In Azoarcus sp. (strain BH72), this protein is Shikimate dehydrogenase (NADP(+)).